Reading from the N-terminus, the 243-residue chain is MQAVVLAAGKGTRLRPLTEDKPKGMVEVDGKPILTHCFDQLVDLGAEKLVVVVGYKKEIIIQHYDDEYRGVPITYAHQREQKGLAHALLTVEDHIDEDFMLMLGDNIFNANLGDVVKRQREDRADAAFLVEEVDWDEASRYGVCVTNDYGEITEVIEKPEEPPSNLVMTGFYTFTPAIFHACHLVQPSNRGEYEISEAIDLLIRSGRTIDAIRIDGWRLDIGYPEDRDEAEQRLQEETTQATE.

The protein belongs to the UDPGP type 2 family.

The catalysed reaction is alpha-D-glucose 1-phosphate + UTP + H(+) = UDP-alpha-D-glucose + diphosphate. It functions in the pathway cell surface structure biogenesis; S-layer biogenesis. In terms of biological role, involved in the assembly of a N-linked pentasaccharide that decorates the S-layer glycoprotein and flagellins. Involved in the biosynthesis of the hexuronic acid found at position 3 of the pentasaccharide. The polypeptide is UTP--glucose-1-phosphate uridylyltransferase AglF (aglF) (Haloferax volcanii (strain ATCC 29605 / DSM 3757 / JCM 8879 / NBRC 14742 / NCIMB 2012 / VKM B-1768 / DS2) (Halobacterium volcanii)).